A 76-amino-acid polypeptide reads, in one-letter code: Sec-independent protein translocase protein TatA (76 aa).

The chain crosses the membrane as a helical span at residues 1 to 21; the sequence is MGSFSIWHWLIVLLIVVLVFG. The segment at 44 to 76 is disordered; that stretch reads RDGSTAPADPAQQVTANKSADANTVDVEAKQKS. The segment covering 55 to 65 has biased composition (polar residues); that stretch reads QQVTANKSADA.

Belongs to the TatA/E family. As to quaternary structure, the Tat system comprises two distinct complexes: a TatABC complex, containing multiple copies of TatA, TatB and TatC subunits, and a separate TatA complex, containing only TatA subunits. Substrates initially bind to the TatABC complex, which probably triggers association of the separate TatA complex to form the active translocon.

Its subcellular location is the cell inner membrane. Its function is as follows. Part of the twin-arginine translocation (Tat) system that transports large folded proteins containing a characteristic twin-arginine motif in their signal peptide across membranes. TatA could form the protein-conducting channel of the Tat system. This Methylibium petroleiphilum (strain ATCC BAA-1232 / LMG 22953 / PM1) protein is Sec-independent protein translocase protein TatA.